Consider the following 740-residue polypeptide: Zn(2)-C6 fungal-type transcription factor mpsB (740 aa).

The segment at residues 25 to 46 is a DNA-binding region (zn(2)-C6 fungal-type); sequence RLKCDRNQPCSTCSHRGLSFSC. Residues 625–645 are disordered; that stretch reads SISTPSHDQDDLDGEAATEAT.

The protein localises to the nucleus. Functionally, transcription factor; part of the gene cluster that mediates the biosynthesis of macrophasetins, 3-decalinoyltetramic acids (DTAs) which feature a tetramate (pyrrolidine-2,4-dione) unit connected to a decalin fragment and that have potent bioactivities. The protein is Zn(2)-C6 fungal-type transcription factor mpsB of Macrophomina phaseolina (strain MS6) (Charcoal rot fungus).